Reading from the N-terminus, the 1107-residue chain is MGSKGAYRYHWQSHNVKHSGVDDMVLLSKITESSIVENLKKRYMDDYIFTYIGSVLISVNPFKQMPYFGEKEVEMYQGAAQYENPPHIYALADSMYRNMIIDRENQCVIISGESGAGKTVAAKYIMSYVSRVSGGGPKVQHVKDIILQSNPLLEAFGNAKTVRNNNSSRFGKYFEIQFSPGGEPDGGKISNFLLEKSRVVMRNPGERSFHIFYQLIEGASPEQKQSLGITSMDYYYYLSLSGSYKVDDIDDKRDFQETLHAMNVIGIFSEEQTLVLQIVAGILHLGNISFKEVGNYAAVESEEFLAFPAYLLGINQDRLKEKLTSRQMDSKWGGKSESIHVTLNVEQACYTRDALAKALHARVFDFLVDSINKAMEKDHEEYNIGVLDIYGFEIFQKNGFEQFCINFVNEKLQQIFIELTLKAEQEEYVQEGIRWTPIEYFNNKIVCDLIESKVNPPGIMSILDDVCATMHAVGEGADQTLLQKLQMQIGSHEHFNSWNQGFIIHHYAGKVSYDMDGFCERNRDVLFMDLIELMQSSELPFIKSLFPENLQADKKGRPTTAGSKIKKQANDLVSTLMKCTPHYIRCIKPNETKKPKDWEESRVKHQVEYLGLKENIRVRRAGYAYRRVFQKFLQRYAILTKATWPVWRGDEKQGVLHLLQSVNMDSDQFQLGRSKVFIKAPESLFLLEEMRERKYDGYARVIQKTWRKFVARKKYVQMREEASDLLLNKKERRRNSINRNFIGDYIGMEERPELQQFVGKREKIDFADTVTKYDRRFKGVKRDLLLTPKCLYLIGREKVKQGPDKGVVKEVLKRRIEVERILSVSLSTMQDDIFILHEQEYDSLLESVFKTEFLSLLAKRYEEKTQKQLPLKFSNTLELKLKKENWGPWSAGGSRQVQFHQGFGDLAILKPSNKVLQVSIGPGLPKNSRPTRRNTVTSRGYPGGTKNNYPMRAAPAPPGCHQNGVIRNQFVPPPHAFGNQRSNQKSLYTSMARPPLPRQQSTGSDRLSQTPESLDFLKVPDQGVAGVRRQTSSRPPPAGGRPKPQPKPKPQVPQCKALYAYDAQDTDELSFNANDIIDIIKEDPSGWWTGRLRGKQGLFPNNYVTKI.

In terms of domain architecture, Myosin motor spans 19-692; the sequence is SGVDDMVLLS…SLFLLEEMRE (674 aa). 112–119 contributes to the ATP binding site; it reads GESGAGKT. The segment at 581–591 is actin-binding; sequence PHYIRCIKPNE. Residues 695-724 enclose the IQ domain; that stretch reads YDGYARVIQKTWRKFVARKKYVQMREEASD. The 193-residue stretch at 730 to 922 folds into the TH1 domain; the sequence is KERRRNSINR…NKVLQVSIGP (193 aa). Residues 919 to 1052 form a disordered region; it reads SIGPGLPKNS…KPQPKPKPQV (134 aa). Polar residues-rich tracts occupy residues 979 to 989 and 998 to 1012; these read NQRSNQKSLYT and RQQS…QTPE. Serine 1001 carries the post-translational modification Phosphoserine. Residues 1034-1051 show a composition bias toward pro residues; the sequence is RPPPAGGRPKPQPKPKPQ. An SH3 domain is found at 1050–1107; sequence PQVPQCKALYAYDAQDTDELSFNANDIIDIIKEDPSGWWTGRLRGKQGLFPNNYVTKI.

The protein belongs to the TRAFAC class myosin-kinesin ATPase superfamily. Myosin family. As to quaternary structure, interacts with CALM and F-actin. Interacts (via SH3 domain) with SYNJ1, DNM1 and DNM2. Interacts with ARL14EP. Interacts with CARMIL1. Detected in kidney glomeruli (at protein level). Detected in utricle.

It localises to the cytoplasm. The protein resides in the cell junction. Its subcellular location is the cytoplasmic vesicle. The protein localises to the clathrin-coated vesicle. It is found in the cytoskeleton. Functionally, myosins are actin-based motor molecules with ATPase activity. Unconventional myosins serve in intracellular movements. Their highly divergent tails bind to membranous compartments, which are then moved relative to actin filaments. Binds to membranes containing anionic phospholipids via its tail domain. Involved in clathrin-mediated endocytosis and intracellular movement of clathrin-coated vesicles. Required for normal morphology of the glomerular basement membrane, normal development of foot processes by kidney podocytes and normal kidney function. In dendritic cells, may control the movement of class II-containing cytoplasmic vesicles along the actin cytoskeleton by connecting them with the actin network via ARL14EP and ARL14. The protein is Unconventional myosin-Ie (Myo1e) of Mus musculus (Mouse).